We begin with the raw amino-acid sequence, 160 residues long: Large ribosomal subunit protein uL16 (160 aa).

The disordered stretch occupies residues 138–160; sequence KNLENSSQENTKDSKKSQEEVKQ. A compositionally biased stretch (basic and acidic residues) spans 147 to 160; that stretch reads NTKDSKKSQEEVKQ.

Belongs to the universal ribosomal protein uL16 family. Part of the 50S ribosomal subunit.

In terms of biological role, binds 23S rRNA and is also seen to make contacts with the A and possibly P site tRNAs. This Prochlorococcus marinus (strain AS9601) protein is Large ribosomal subunit protein uL16.